The primary structure comprises 65 residues: Large ribosomal subunit protein bL35 (65 aa).

This sequence belongs to the bacterial ribosomal protein bL35 family.

The sequence is that of Large ribosomal subunit protein bL35 from Neisseria meningitidis serogroup A / serotype 4A (strain DSM 15465 / Z2491).